The primary structure comprises 602 residues: Prostaglandin G/H synthase 1 (602 aa).

An N-terminal signal peptide occupies residues 1 to 26 (MSRRSLSLQFPLLLLLLLLPPPPVLL). An EGF-like domain is found at 34-72 (PVNPCCYYPCQNQGVCVRFGLDHYQCDCTRTGYSGPNCT). 4 cysteine pairs are disulfide-bonded: Cys-38–Cys-49, Cys-39–Cys-161, Cys-43–Cys-59, and Cys-61–Cys-71. N-linked (GlcNAc...) asparagine glycosylation is found at Asn-70, Asn-106, and Asn-146. Catalysis depends on His-209, which acts as the Proton acceptor. The For cyclooxygenase activity role is filled by Tyr-387. Residue His-390 coordinates heme b. N-linked (GlcNAc...) asparagine glycosylation is present at Asn-412. A disulfide bridge connects residues Cys-571 and Cys-577.

It belongs to the prostaglandin G/H synthase family. Homodimer. Heme b is required as a cofactor.

The protein localises to the microsome membrane. It is found in the endoplasmic reticulum membrane. The enzyme catalyses (5Z,8Z,11Z,14Z)-eicosatetraenoate + AH2 + 2 O2 = prostaglandin H2 + A + H2O. The catalysed reaction is (5Z,8Z,11Z,14Z)-eicosatetraenoate + 2 O2 = prostaglandin G2. It catalyses the reaction prostaglandin G2 + AH2 = prostaglandin H2 + A + H2O. It carries out the reaction (9Z,12Z)-octadecadienoate + AH2 + O2 = (9R)-hydroxy-(10E,12Z)-octadecadienoate + A + H2O. The enzyme catalyses (9Z,12Z)-octadecadienoate + AH2 + O2 = (9S)-hydroxy-(10E,12Z)-octadecadienoate + A + H2O. The catalysed reaction is (9Z,12Z)-octadecadienoate + AH2 + O2 = (13S)-hydroxy-(9Z,11E)-octadecadienoate + A + H2O. It catalyses the reaction (9Z,12Z)-octadecadienoate + AH2 + O2 = (13R)-hydroxy-(9Z,11E)-octadecadienoate + A + H2O. Its pathway is lipid metabolism; prostaglandin biosynthesis. With respect to regulation, the cyclooxygenase activity is inhibited by nonsteroidal anti-inflammatory drugs (NSAIDs) including ibuprofen, flurbiprofen, ketoprofen, naproxen, flurbiprofen, anirolac, fenclofenac and diclofenac. Dual cyclooxygenase and peroxidase that plays an important role in the biosynthesis pathway of prostanoids, a class of C20 oxylipins mainly derived from arachidonate ((5Z,8Z,11Z,14Z)-eicosatetraenoate, AA, C20:4(n-6)), with a particular role in the inflammatory response. The cyclooxygenase activity oxygenates AA to the hydroperoxy endoperoxide prostaglandin G2 (PGG2), and the peroxidase activity reduces PGG2 to the hydroxy endoperoxide prostaglandin H2 (PGH2), the precursor of all 2-series prostaglandins and thromboxanes. This complex transformation is initiated by abstraction of hydrogen at carbon 13 (with S-stereochemistry), followed by insertion of molecular O2 to form the endoperoxide bridge between carbon 9 and 11 that defines prostaglandins. The insertion of a second molecule of O2 (bis-oxygenase activity) yields a hydroperoxy group in PGG2 that is then reduced to PGH2 by two electrons. Involved in the constitutive production of prostanoids in particular in the stomach and platelets. In gastric epithelial cells, it is a key step in the generation of prostaglandins, such as prostaglandin E2 (PGE2), which plays an important role in cytoprotection. In platelets, it is involved in the generation of thromboxane A2 (TXA2), which promotes platelet activation and aggregation, vasoconstriction and proliferation of vascular smooth muscle cells. Can also use linoleate (LA, (9Z,12Z)-octadecadienoate, C18:2(n-6)) as substrate and produce hydroxyoctadecadienoates (HODEs) in a regio- and stereospecific manner, being (9R)-HODE ((9R)-hydroxy-(10E,12Z)-octadecadienoate) and (13S)-HODE ((13S)-hydroxy-(9Z,11E)-octadecadienoate) its major products. This is Prostaglandin G/H synthase 1 from Rattus norvegicus (Rat).